Here is a 360-residue protein sequence, read N- to C-terminus: DNA replication and repair protein RecF (360 aa).

ATP is bound at residue Gly-30 to Thr-37.

This sequence belongs to the RecF family.

It is found in the cytoplasm. Functionally, the RecF protein is involved in DNA metabolism; it is required for DNA replication and normal SOS inducibility. RecF binds preferentially to single-stranded, linear DNA. It also seems to bind ATP. The chain is DNA replication and repair protein RecF from Haemophilus ducreyi (strain 35000HP / ATCC 700724).